The following is a 457-amino-acid chain: Multidrug resistance protein MdtK (457 aa).

A run of 12 helical transmembrane segments spans residues 11–31, 53–73, 93–113, 127–147, 160–180, 188–208, 243–263, 276–296, 314–334, 350–370, 387–407, and 418–438; these read LLAL…MGFV, IWLP…PVIA, WLAG…GYII, AVGY…FQVA, GMVM…IFIY, LGGI…FIAM, LPIA…ALLV, IALN…AAVT, AART…IFTV, VVAL…SDSI, IFFI…YILA, and PAGF…LMML.

Belongs to the multi antimicrobial extrusion (MATE) (TC 2.A.66.1) family. MdtK subfamily.

Its subcellular location is the cell inner membrane. Functionally, multidrug efflux pump that functions probably as a Na(+)/drug antiporter. This chain is Multidrug resistance protein MdtK, found in Salmonella heidelberg (strain SL476).